The following is a 468-amino-acid chain: Adenosylhomocysteinase (468 aa).

Residues T63, D139, and E164 each contribute to the substrate site. Residue 165 to 167 (TTT) participates in NAD(+) binding. 2 residues coordinate substrate: K194 and D198. NAD(+)-binding positions include N199, 228 to 233 (GYGDVG), E251, N300, 321 to 323 (IGH), and N374.

This sequence belongs to the adenosylhomocysteinase family. NAD(+) is required as a cofactor.

It is found in the cytoplasm. The catalysed reaction is S-adenosyl-L-homocysteine + H2O = L-homocysteine + adenosine. Its pathway is amino-acid biosynthesis; L-homocysteine biosynthesis; L-homocysteine from S-adenosyl-L-homocysteine: step 1/1. In terms of biological role, may play a key role in the regulation of the intracellular concentration of adenosylhomocysteine. The sequence is that of Adenosylhomocysteinase from Stutzerimonas stutzeri (strain A1501) (Pseudomonas stutzeri).